Here is a 246-residue protein sequence, read N- to C-terminus: Transcriptional regulatory protein LytR (246 aa).

The Response regulatory domain occupies 2-116 (KALIIDDEPL…RIEQAVNKVR (115 aa)). D53 carries the post-translational modification 4-aspartylphosphate. An HTH LytTR-type domain is found at 141–245 (LPVEIDDKIH…MKDFKASIGL (105 aa)).

In terms of assembly, homodimer; when phosphorylated. Phosphorylated and dephosphorylated by LytS.

It localises to the cytoplasm. In terms of biological role, member of the two-component regulatory system LytR/LytS that regulates genes involved in autolysis, programmed cell death, biofilm formation and cell wall metabolism. Also participates in sensing and responding to host defense cationic antimicrobial peptides (HDPs). Upon phosphorylation by LytS, functions as a transcription regulator by direct binding to promoter regions of target genes including lrgA and lrgB, to positively regulate their expression. This is Transcriptional regulatory protein LytR (lytR) from Staphylococcus aureus (strain bovine RF122 / ET3-1).